The sequence spans 126 residues: Fluoride-specific ion channel FluC (126 aa).

The next 4 helical transmembrane spans lie at 3–23 (LSILAVGIGGALGSLFRWFLG), 35–55 (LGTLASNVIAGYIIGAAVAYF), 68–88 (FIITGLMGGLSTFSTFSAEVV), and 103–123 (IAIHVTASVIATVLGITTVAV). 2 residues coordinate Na(+): Gly-75 and Ser-78.

Belongs to the fluoride channel Fluc/FEX (TC 1.A.43) family.

It localises to the cell inner membrane. It catalyses the reaction fluoride(in) = fluoride(out). With respect to regulation, na(+) is not transported, but it plays an essential structural role and its presence is essential for fluoride channel function. In terms of biological role, fluoride-specific ion channel. Important for reducing fluoride concentration in the cell, thus reducing its toxicity. In Paraburkholderia phymatum (strain DSM 17167 / CIP 108236 / LMG 21445 / STM815) (Burkholderia phymatum), this protein is Fluoride-specific ion channel FluC.